The chain runs to 129 residues: MVEGDFVDEQSNIALLSSKSMCGDHHSVKNSIGDEIFKLLTKILNSDEKASGDVHTLVSGTPDLSNFNLDNEPLENILAVFIISFIIVVVGVLLLGLIGMIFISLRSGSSNDKKLQSNDEEKQALAEKA.

Residues I77 to L97 form a helical membrane-spanning segment. The disordered stretch occupies residues S109–A129. Basic and acidic residues predominate over residues N111–A129.

Its subcellular location is the vacuole membrane. This is an uncharacterized protein from Saccharomyces cerevisiae (strain ATCC 204508 / S288c) (Baker's yeast).